The following is a 532-amino-acid chain: Exodeoxyribonuclease 7 large subunit (532 aa).

Residues Ala497–Phe532 are disordered. The span at Thr499–Ala512 shows a compositional bias: low complexity.

This sequence belongs to the XseA family. Heterooligomer composed of large and small subunits.

It localises to the cytoplasm. It catalyses the reaction Exonucleolytic cleavage in either 5'- to 3'- or 3'- to 5'-direction to yield nucleoside 5'-phosphates.. Bidirectionally degrades single-stranded DNA into large acid-insoluble oligonucleotides, which are then degraded further into small acid-soluble oligonucleotides. In Agrobacterium fabrum (strain C58 / ATCC 33970) (Agrobacterium tumefaciens (strain C58)), this protein is Exodeoxyribonuclease 7 large subunit.